The primary structure comprises 295 residues: Mycothiol acetyltransferase (295 aa).

Glu30 serves as a coordination point for 1D-myo-inositol 2-(L-cysteinylamino)-2-deoxy-alpha-D-glucopyranoside. An acetyl-CoA-binding site is contributed by 62–64; that stretch reads LVV. Positions 137 to 295 constitute an N-acetyltransferase domain; the sequence is VTVRAFRADS…DDDTHVQYRR (159 aa). 1D-myo-inositol 2-(L-cysteinylamino)-2-deoxy-alpha-D-glucopyranoside-binding residues include Glu165, Lys209, and Glu227. Acetyl-CoA-binding positions include 231–233 and 238–244; these read VGI and QGRGLGK. Tyr265 contributes to the 1D-myo-inositol 2-(L-cysteinylamino)-2-deoxy-alpha-D-glucopyranoside binding site.

It belongs to the acetyltransferase family. MshD subfamily. As to quaternary structure, monomer.

The catalysed reaction is 1D-myo-inositol 2-(L-cysteinylamino)-2-deoxy-alpha-D-glucopyranoside + acetyl-CoA = mycothiol + CoA + H(+). Functionally, catalyzes the transfer of acetyl from acetyl-CoA to desacetylmycothiol (Cys-GlcN-Ins) to form mycothiol. The chain is Mycothiol acetyltransferase from Nocardioides sp. (strain ATCC BAA-499 / JS614).